Here is a 189-residue protein sequence, read N- to C-terminus: ATP-dependent protease subunit HslV (189 aa).

Residue threonine 12 is part of the active site. Na(+) is bound by residues alanine 172, cysteine 175, and threonine 178.

It belongs to the peptidase T1B family. HslV subfamily. A double ring-shaped homohexamer of HslV is capped on each side by a ring-shaped HslU homohexamer. The assembly of the HslU/HslV complex is dependent on binding of ATP.

The protein resides in the cytoplasm. It catalyses the reaction ATP-dependent cleavage of peptide bonds with broad specificity.. Its activity is regulated as follows. Allosterically activated by HslU binding. Protease subunit of a proteasome-like degradation complex believed to be a general protein degrading machinery. The sequence is that of ATP-dependent protease subunit HslV from Anaplasma phagocytophilum (strain HZ).